A 926-amino-acid chain; its full sequence is Progesterone receptor (926 aa).

Positions 1–48 are disordered; that stretch reads MTELQAKDPQVLHTSGASPSPPHIGSPLLARLDSGPFQGSQHSDVSSV. Positions 1–165 are AF3; mediates transcriptional activation (in isoform B); that stretch reads MTELQAKDPQ…PATKGLLSPL (165 aa). The segment at 1-559 is modulating, Pro-Rich; the sequence is MTELQAKDPQ…YGFDSLPQKI (559 aa). Residue Lys-7 forms a Glycyl lysine isopeptide (Lys-Gly) (interchain with G-Cter in SUMO) linkage. A Phosphoserine modification is found at Ser-20. Positions 56 to 60 match the LXXL motif 1 motif; the sequence is LDGLL. The residue at position 82 (Ser-82) is a Phosphoserine. Positions 116 to 120 match the LXXL motif 1 motif; that stretch reads LDSLL. Phosphoserine occurs at positions 131 and 163. The interval 166 to 305 is mediates transcriptional transrepression (in isoform A); that stretch reads MSRPEIKAGD…LATTVVDFIH (140 aa). A disordered region spans residues 168–256; it reads RPEIKAGDSS…GTGSGGGVAA (89 aa). Residues 184–188 carry the Nuclear localization signal motif; sequence KVLPK. Phosphoserine occurs at positions 191 and 214. Ser-294 bears the Phosphoserine; by MAPK1 mark. Residues 327–364 form a disordered region; it reads DSYDGGATAQGPFAPPRGSPSAPSPPVPCGDFPDCTYP. Residues 339-354 show a composition bias toward pro residues; it reads FAPPRGSPSAPSPPVP. Ser-345 is subject to Phosphoserine; by MAPK. Residue Lys-388 forms a Glycyl lysine isopeptide (Lys-Gly) (interchain with G-Cter in SUMO); alternate linkage. Residue Lys-388 forms a Glycyl lysine isopeptide (Lys-Gly) (interchain with G-Cter in ubiquitin); alternate linkage. A disordered region spans residues 391 to 447; sequence EEGADAAVRSPRPYLSAGASSSTFPDFPLAPAPQRAPSSRPGEAAVAGGPSSAAVSP. Ser-400 bears the Phosphoserine; by CDK2 mark. Low complexity predominate over residues 422 to 447; it reads APQRAPSSRPGEAAVAGGPSSAAVSP. The tract at residues 453–539 is AF1; mediates transcriptional activation; it reads SALECILYKA…VYPPYLNYLR (87 aa). A Glycyl lysine isopeptide (Lys-Gly) (interchain with G-Cter in SUMO) cross-link involves residue Lys-524. Positions 557–632 form a DNA-binding region, nuclear receptor; the sequence is QKICLICGDE…AGMVLGGRKF (76 aa). NR C4-type zinc fingers lie at residues 560–580 and 596–615; these read CLICGDEASGCHYGVLTCGSC and CAGRNDCIVDKIRRKNCPAC. Ser-669 carries the post-translational modification Phosphoserine. Residues 672 to 906 form the NR LBD domain; that stretch reads QEIQLVPPLI…EFPEMMSEVI (235 aa). Residues 673 to 926 form an AF2; mediates transcriptional activation region; that stretch reads EIQLVPPLIN…MVKPLLFHKK (254 aa). Arg-759 serves as a coordination point for progesterone.

It belongs to the nuclear hormone receptor family. NR3 subfamily. In terms of assembly, interacts with SMARD1 and UNC45A. Interacts with CUEDC2; the interaction promotes ubiquitination, decreases sumoylation, and represses transcriptional activity. Interacts with PIAS3; the interaction promotes sumoylation of PR in a hormone-dependent manner, inhibits DNA-binding, and alters nuclear export. Interacts with SP1; the interaction requires ligand-induced phosphorylation on Ser-294 by ERK1/2 MAPK. Interacts with PRMT2. Isoform A interacts with NCOR2. Isoform B (but not isoform A) interacts with NCOA2 and NCOA1. Isoform B (but not isoform A) interacts with KLF9. In terms of processing, phosphorylated on multiple serine sites. Several of these sites are hormone-dependent. Phosphorylation on Ser-294 is highly hormone-dependent and modulates ubiquitination and sumoylation on Lys-388. Phosphorylation on Ser-345 also requires induction by hormone. Basal phosphorylation on Ser-82, Ser-163, Ser-191 and Ser-400 is increased in response to progesterone and can be phosphorylated in vitro by the CDK2-A1 complex. Increased levels of phosphorylation on Ser-400 also in the presence of EGF, heregulin, IGF, PMA and FBS. Phosphorylation at this site by CDK2 is ligand-independent, and increases nuclear translocation and transcriptional activity. Phosphorylation at Ser-163 and Ser-294, but not at Ser-191, is impaired during the G(2)/M phase of the cell cycle. Phosphorylation on Ser-345 by ERK1/2 MAPK is required for interaction with SP1. Sumoylation is hormone-dependent and represses transcriptional activity. Sumoylation on all three sites is enhanced by PIAS3. Desumoylated by SENP1. Sumoylation on Lys-388, the main site of sumoylation, is repressed by ubiquitination on the same site, and modulated by phosphorylation at Ser-294. Post-translationally, ubiquitination is hormone-dependent and represses sumoylation on the same site. Promoted by MAPK-mediated phosphorylation on Ser-294. Ubiquitinated by UBR5, leading to its degradation: UBR5 specifically recognizes and binds ligand-bound PGR when it is not associated with coactivators (NCOAs). In presence of NCOAs, the UBR5-degron is not accessible, preventing its ubiquitination and degradation. In terms of processing, palmitoylated by ZDHHC7 and ZDHHC21. Palmitoylation is required for plasma membrane targeting and for rapid intracellular signaling via ERK and AKT kinases and cAMP generation. Expression of isoform A and isoform B in mammary epithelial cells is temporally and spatially separated during normal mammary gland development. Isoform A and isoform B are expressed in the pituitary. Isoform A and isoform B are differentially expressed in the ovary and oviduct, and the level of expression is dependent on both the cell type and estrous cycle stage.

Its subcellular location is the nucleus. The protein resides in the cytoplasm. Functionally, the steroid hormones and their receptors are involved in the regulation of eukaryotic gene expression and affect cellular proliferation and differentiation in target tissues. Depending on the isoform, progesterone receptor functions as a transcriptional activator or repressor. Ligand-dependent transdominant repressor of steroid hormone receptor transcriptional activity including repression of its isoform B, MR and ER. Transrepressional activity may involve recruitment of corepressor NCOR2. Its function is as follows. Transcriptional activator of several progesteron-dependent promoters in a variety of cell types. Involved in activation of SRC-dependent MAPK signaling on hormone stimulation. This is Progesterone receptor (Pgr) from Mus musculus (Mouse).